We begin with the raw amino-acid sequence, 321 residues long: tRNA(Ile)-lysidine synthase (321 aa).

ATP is bound at residue 30-35; the sequence is SGGSDS.

Belongs to the tRNA(Ile)-lysidine synthase family.

The protein resides in the cytoplasm. The enzyme catalyses cytidine(34) in tRNA(Ile2) + L-lysine + ATP = lysidine(34) in tRNA(Ile2) + AMP + diphosphate + H(+). In terms of biological role, ligates lysine onto the cytidine present at position 34 of the AUA codon-specific tRNA(Ile) that contains the anticodon CAU, in an ATP-dependent manner. Cytidine is converted to lysidine, thus changing the amino acid specificity of the tRNA from methionine to isoleucine. The protein is tRNA(Ile)-lysidine synthase of Chlamydia trachomatis serovar D (strain ATCC VR-885 / DSM 19411 / UW-3/Cx).